Reading from the N-terminus, the 1086-residue chain is Phosphinothricin tripeptide synthetase PhsC (1086 aa).

The segment at 22–43 (RLRAAAAPGPDPAIPRRPDDDG) is disordered. Positions 45 to 484 (VPLSFAQHRL…LAALPVLTRD (440 aa)) are condensation. Residues 510 to 901 (LEDSARRHPD…GRTDHQVKLR (392 aa)) are adenylation. The disordered stretch occupies residues 983–1007 (GKLDREALPDPLAQSGDTAGNRPPL). One can recognise a Carrier domain in the interval 1006–1081 (PLLDPVEERI…GLARSVSAER (76 aa)). Position 1041 is an O-(pantetheine 4'-phosphoryl)serine (Ser-1041).

It belongs to the NRP synthetase family. Pantetheine 4'-phosphate serves as cofactor.

It carries out the reaction holo-[peptidyl-carrier protein] + L-alanine + ATP = L-alanyl-[peptidyl-carrier protein] + AMP + diphosphate. Its pathway is secondary metabolite biosynthesis; bialaphos biosynthesis. Functionally, involved in the biosynthesis of phosphinothricin tripeptide (PTT), also known as bialaphos (BA), a natural-product antibiotic and potent herbicide. Adenylates L-alanine and loads it onto a peptidyl carrier domain via a thioester linkage to the phosphopanthetheine moiety. Shows weaker activity with aminobutyric acid and L-serine. The polypeptide is Phosphinothricin tripeptide synthetase PhsC (Streptomyces viridochromogenes (strain DSM 40736 / JCM 4977 / BCRC 1201 / Tue 494)).